A 184-amino-acid polypeptide reads, in one-letter code: Fe/S biogenesis protein NfuA (184 aa).

[4Fe-4S] cluster-binding residues include cysteine 142 and cysteine 145.

The protein belongs to the NfuA family. In terms of assembly, homodimer. It depends on [4Fe-4S] cluster as a cofactor.

Involved in iron-sulfur cluster biogenesis. Binds a 4Fe-4S cluster, can transfer this cluster to apoproteins, and thereby intervenes in the maturation of Fe/S proteins. Could also act as a scaffold/chaperone for damaged Fe/S proteins. The chain is Fe/S biogenesis protein NfuA from Wigglesworthia glossinidia brevipalpis.